Reading from the N-terminus, the 87-residue chain is Large ribosomal subunit protein bL31B (87 aa).

This sequence belongs to the bacterial ribosomal protein bL31 family. Type B subfamily. Part of the 50S ribosomal subunit.

In Pseudomonas aeruginosa (strain LESB58), this protein is Large ribosomal subunit protein bL31B.